A 396-amino-acid polypeptide reads, in one-letter code: Elongation factor Tu (396 aa).

Positions 10-206 constitute a tr-type G domain; it reads KPHCNIGTIG…AVDSYIPQPE (197 aa). The tract at residues 19–26 is G1; sequence GHVDHGKT. 19-26 serves as a coordination point for GTP; that stretch reads GHVDHGKT. Thr26 is a binding site for Mg(2+). Residues 60-64 form a G2 region; it reads GITIS. Residues 81-84 form a G3 region; the sequence is DCPG. GTP is bound by residues 81–85 and 136–139; these read DCPGH and NKCD. The G4 stretch occupies residues 136–139; the sequence is NKCD. The G5 stretch occupies residues 174–176; the sequence is SAL.

The protein belongs to the TRAFAC class translation factor GTPase superfamily. Classic translation factor GTPase family. EF-Tu/EF-1A subfamily. In terms of assembly, monomer.

The protein localises to the cytoplasm. The enzyme catalyses GTP + H2O = GDP + phosphate + H(+). Functionally, GTP hydrolase that promotes the GTP-dependent binding of aminoacyl-tRNA to the A-site of ribosomes during protein biosynthesis. In Rhodopseudomonas palustris (strain BisA53), this protein is Elongation factor Tu.